We begin with the raw amino-acid sequence, 543 residues long: CTP synthase (543 aa).

Residues 1–265 (MTRFVFITGG…DQEVLRYFDL (265 aa)) are amidoligase domain. Residue Ser13 participates in CTP binding. UTP is bound at residue Ser13. 14-19 (SLGKGI) lines the ATP pocket. Tyr54 lines the L-glutamine pocket. Asp71 contributes to the ATP binding site. 2 residues coordinate Mg(2+): Asp71 and Glu139. Residues 146–148 (DIE), 186–191 (KTKPTQ), and Lys222 contribute to the CTP site. Residues 186–191 (KTKPTQ) and Lys222 contribute to the UTP site. In terms of domain architecture, Glutamine amidotransferase type-1 spans 291-542 (RVAIVGKYTA…IAAAVKEAHR (252 aa)). Residue Gly354 coordinates L-glutamine. Residue Cys381 is the Nucleophile; for glutamine hydrolysis of the active site. L-glutamine is bound by residues 382–385 (FGMQ), Glu405, and Arg470. Active-site residues include His515 and Glu517.

It belongs to the CTP synthase family. Homotetramer.

It catalyses the reaction UTP + L-glutamine + ATP + H2O = CTP + L-glutamate + ADP + phosphate + 2 H(+). The catalysed reaction is L-glutamine + H2O = L-glutamate + NH4(+). The enzyme catalyses UTP + NH4(+) + ATP = CTP + ADP + phosphate + 2 H(+). It functions in the pathway pyrimidine metabolism; CTP biosynthesis via de novo pathway; CTP from UDP: step 2/2. Its activity is regulated as follows. Allosterically activated by GTP, when glutamine is the substrate; GTP has no effect on the reaction when ammonia is the substrate. The allosteric effector GTP functions by stabilizing the protein conformation that binds the tetrahedral intermediate(s) formed during glutamine hydrolysis. Inhibited by the product CTP, via allosteric rather than competitive inhibition. In terms of biological role, catalyzes the ATP-dependent amination of UTP to CTP with either L-glutamine or ammonia as the source of nitrogen. Regulates intracellular CTP levels through interactions with the four ribonucleotide triphosphates. This chain is CTP synthase, found in Gluconobacter oxydans (strain 621H) (Gluconobacter suboxydans).